The chain runs to 285 residues: Golgi phosphoprotein 3-like (285 aa).

A disordered region spans residues 1–43; the sequence is MTTLTHRTRRTEVSKSCEKKIESEEDTNQERSPDNEDPGDSKD. Residues 10–43 are compositionally biased toward basic and acidic residues; that stretch reads RTEVSKSCEKKIESEEDTNQERSPDNEDPGDSKD. The a 1,2-diacyl-sn-glycero-3-phospho-(1D-myo-inositol 4-phosphate) site is built by Trp-67 and Arg-76. Position 112 is a phosphoserine (Ser-112). A 1,2-diacyl-sn-glycero-3-phospho-(1D-myo-inositol 4-phosphate) contacts are provided by Arg-157 and Arg-160. Positions 176 to 187 are beta-hairpin required for oligomerization; the sequence is EKQNFLLFDMTT.

It belongs to the GOLPH3/VPS74 family. Homooligomer. Does not interact MYO18; differs from GOLPH3 by its inability to interact with MYO18. May interact with ARF1.

The protein localises to the golgi apparatus. The protein resides in the golgi stack membrane. It localises to the trans-Golgi network membrane. In terms of biological role, phosphatidylinositol-4-phosphate-binding protein that may antagonize the action of GOLPH3 which is required for the process of vesicle budding at the Golgi and anterograde transport to the plasma membrane. In Rattus norvegicus (Rat), this protein is Golgi phosphoprotein 3-like (Golph3l).